A 166-amino-acid polypeptide reads, in one-letter code: Small ribosomal subunit protein uS5 (166 aa).

Residues 11–74 (LEDRVVSINR…EDAKKNLINV (64 aa)) form the S5 DRBM domain.

This sequence belongs to the universal ribosomal protein uS5 family. As to quaternary structure, part of the 30S ribosomal subunit. Contacts proteins S4 and S8.

Its function is as follows. With S4 and S12 plays an important role in translational accuracy. Functionally, located at the back of the 30S subunit body where it stabilizes the conformation of the head with respect to the body. The protein is Small ribosomal subunit protein uS5 of Latilactobacillus sakei subsp. sakei (strain 23K) (Lactobacillus sakei subsp. sakei).